A 121-amino-acid polypeptide reads, in one-letter code: Protein yippee-like At3g55890 (121 aa).

The Yippee domain occupies 12–109; that stretch reads NIYICKLCKT…LELYKISGPH (98 aa). Residues cysteine 16, cysteine 19, cysteine 72, and cysteine 75 each coordinate Zn(2+).

This sequence belongs to the yippee family.

The protein is Protein yippee-like At3g55890 of Arabidopsis thaliana (Mouse-ear cress).